Here is a 246-residue protein sequence, read N- to C-terminus: Phosducin (246 aa).

The span at 1–14 (MEEAKSQSLEEDFE) shows a compositional bias: acidic residues. The interval 1–70 (MEEAKSQSLE…GKDSKERVSR (70 aa)) is disordered. One can recognise a Phosducin domain in the interval 1-244 (MEEAKSQSLE…LEHTKIEEED (244 aa)). Over residues 60 to 69 (NGKDSKERVS) the composition is skewed to basic and acidic residues. Position 73 is a phosphoserine; by PKA (Ser73). The tract at residues 111 to 246 (YGFVYELETG…HTKIEEEDVE (136 aa)) is thioredoxin fold.

The protein belongs to the phosducin family. In terms of assembly, forms a complex with the beta and gamma subunits of the GTP-binding protein, transducin. Interacts with CRX. Post-translationally, light-induced changes in cyclic nucleotide levels modulate the phosphorylation of this protein by cAMP kinase.

It localises to the cytoplasm. It is found in the cytosol. The protein localises to the nucleus. Its subcellular location is the cell projection. The protein resides in the cilium. It localises to the photoreceptor outer segment. It is found in the photoreceptor inner segment. Its function is as follows. May participate in the regulation of visual phototransduction or in the integration of photoreceptor metabolism. Inhibits the transcriptional activation activity of the cone-rod homeobox CRX. The chain is Phosducin (PDC) from Homo sapiens (Human).